The following is a 621-amino-acid chain: Chaperone protein HscA homolog (621 aa).

It belongs to the heat shock protein 70 family.

In terms of biological role, chaperone involved in the maturation of iron-sulfur cluster-containing proteins. Has a low intrinsic ATPase activity which is markedly stimulated by HscB. In Pseudomonas fluorescens (strain Pf0-1), this protein is Chaperone protein HscA homolog.